The following is a 138-amino-acid chain: Basic phospholipase A2 PL-X' (138 aa).

Positions 1-16 (MRTLWIMAVLLVGVEG) are cleaved as a signal peptide. Disulfide bonds link cysteine 42/cysteine 131, cysteine 44/cysteine 60, cysteine 59/cysteine 111, cysteine 65/cysteine 138, cysteine 66/cysteine 104, cysteine 73/cysteine 97, and cysteine 91/cysteine 102. Residues tyrosine 43, glycine 45, and glycine 47 each contribute to the Ca(2+) site. Residue histidine 63 is part of the active site. Aspartate 64 contacts Ca(2+). Residue aspartate 105 is part of the active site.

The protein belongs to the phospholipase A2 family. Group II subfamily. D49 sub-subfamily. It depends on Ca(2+) as a cofactor. As to expression, expressed by the venom gland.

It is found in the secreted. It catalyses the reaction a 1,2-diacyl-sn-glycero-3-phosphocholine + H2O = a 1-acyl-sn-glycero-3-phosphocholine + a fatty acid + H(+). In terms of biological role, PLA2 catalyzes the calcium-dependent hydrolysis of the 2-acyl groups in 3-sn-phosphoglycerides. This Protobothrops flavoviridis (Habu) protein is Basic phospholipase A2 PL-X'.